The following is an 877-amino-acid chain: Probable Ras GTPase-activating-like protein ngap (877 aa).

A C2 domain is found at 72–218; the sequence is TPSATYESLI…KDQKERELWF (147 aa). The tract at residues 350 to 456 is disordered; the sequence is SDDGDISGLK…ETINLSSSIN (107 aa). A compositionally biased stretch (low complexity) spans 389–409; the sequence is TTATTTPSSTPSTPISPSSQS. Polar residues predominate over residues 410–425; it reads NNIKTPDSKTRSSSNA. Composition is skewed to low complexity over residues 426-438 and 447-456; these read STNT…KSTG and ETINLSSSIN. The 212-residue stretch at 591 to 802 folds into the Ras-GAP domain; the sequence is GKCLYLLKSL…ENMKSFINTL (212 aa). The stretch at 820–848 forms a coiled coil; sequence LEKELACLYRHLIKQRQDMAEEMESTESE.

May function as a Ras GTPase-activating protein. This Dictyostelium discoideum (Social amoeba) protein is Probable Ras GTPase-activating-like protein ngap (ngap).